Consider the following 458-residue polypeptide: tRNA-2-methylthio-N(6)-dimethylallyladenosine synthase (458 aa).

One can recognise an MTTase N-terminal domain in the interval 15-134; the sequence is KKVFIKTYGC…LPELLEKAKQ (120 aa). Residues cysteine 24, cysteine 60, cysteine 97, cysteine 175, cysteine 179, and cysteine 182 each coordinate [4Fe-4S] cluster. Residues 161–395 enclose the Radical SAM core domain; it reads RKRGVSAFLT…LLLEQQNTFL (235 aa). One can recognise a TRAM domain in the interval 396 to 457; it reads RSKIGQKTDV…SNSFVGEMTN (62 aa).

It belongs to the methylthiotransferase family. MiaB subfamily. Monomer. [4Fe-4S] cluster is required as a cofactor.

The protein localises to the cytoplasm. It carries out the reaction N(6)-dimethylallyladenosine(37) in tRNA + (sulfur carrier)-SH + AH2 + 2 S-adenosyl-L-methionine = 2-methylsulfanyl-N(6)-dimethylallyladenosine(37) in tRNA + (sulfur carrier)-H + 5'-deoxyadenosine + L-methionine + A + S-adenosyl-L-homocysteine + 2 H(+). In terms of biological role, catalyzes the methylthiolation of N6-(dimethylallyl)adenosine (i(6)A), leading to the formation of 2-methylthio-N6-(dimethylallyl)adenosine (ms(2)i(6)A) at position 37 in tRNAs that read codons beginning with uridine. This is tRNA-2-methylthio-N(6)-dimethylallyladenosine synthase from Bartonella tribocorum (strain CIP 105476 / IBS 506).